We begin with the raw amino-acid sequence, 152 residues long: Large ribosomal subunit protein bL9 (152 aa).

The protein belongs to the bacterial ribosomal protein bL9 family.

Its function is as follows. Binds to the 23S rRNA. This Coxiella burnetii (strain Dugway 5J108-111) protein is Large ribosomal subunit protein bL9.